We begin with the raw amino-acid sequence, 306 residues long: OVARIAN TUMOR DOMAIN-containing deubiquitinating enzyme 1 (306 aa).

An OTU domain is found at 81–295 (IGIRRTRGDG…PGHYDILYPK (215 aa)). The active site involves Asp89. The active-site Nucleophile is the Cys92. Catalysis depends on residues His259 and His288.

This sequence belongs to the peptidase C65 family.

The catalysed reaction is Thiol-dependent hydrolysis of ester, thioester, amide, peptide and isopeptide bonds formed by the C-terminal Gly of ubiquitin (a 76-residue protein attached to proteins as an intracellular targeting signal).. Its activity is regulated as follows. Cleavage activities for 'Lys-48'- and 'Lys-63'-linked ubiquitin (UB) tetramers is inhibited by UB aldehyde and N-ethylmaleimide but not by the metalloprotease inhibitors 1,10-phenanthroline and EDTA, and the serine protease inhibitor phenylmethylsulfonyl fluoride. Hydrolase that can remove conjugated ubiquitin from proteins in vitro and may therefore play an important regulatory role at the level of protein turnover by preventing degradation. Cysteine protease with a preference for Met-1 and 'Lys-48' over 'Lys-63'-linked ubiquitin (UB) tetramers (e.g. Ub2, Ub3 and Ub4) as substrates. The protein is OVARIAN TUMOR DOMAIN-containing deubiquitinating enzyme 1 of Arabidopsis thaliana (Mouse-ear cress).